Consider the following 141-residue polypeptide: 3-hydroxyacyl-[acyl-carrier-protein] dehydratase FabZ (141 aa).

The active site involves H49.

It belongs to the thioester dehydratase family. FabZ subfamily.

The protein localises to the cytoplasm. The enzyme catalyses a (3R)-hydroxyacyl-[ACP] = a (2E)-enoyl-[ACP] + H2O. Functionally, involved in unsaturated fatty acids biosynthesis. Catalyzes the dehydration of short chain beta-hydroxyacyl-ACPs and long chain saturated and unsaturated beta-hydroxyacyl-ACPs. The sequence is that of 3-hydroxyacyl-[acyl-carrier-protein] dehydratase FabZ from Clostridium acetobutylicum (strain ATCC 824 / DSM 792 / JCM 1419 / IAM 19013 / LMG 5710 / NBRC 13948 / NRRL B-527 / VKM B-1787 / 2291 / W).